Reading from the N-terminus, the 284-residue chain is Bifunctional protein FolD (284 aa).

NADP(+)-binding positions include 165 to 167 (GRS) and S190.

The protein belongs to the tetrahydrofolate dehydrogenase/cyclohydrolase family. As to quaternary structure, homodimer.

It catalyses the reaction (6R)-5,10-methylene-5,6,7,8-tetrahydrofolate + NADP(+) = (6R)-5,10-methenyltetrahydrofolate + NADPH. The catalysed reaction is (6R)-5,10-methenyltetrahydrofolate + H2O = (6R)-10-formyltetrahydrofolate + H(+). The protein operates within one-carbon metabolism; tetrahydrofolate interconversion. Its function is as follows. Catalyzes the oxidation of 5,10-methylenetetrahydrofolate to 5,10-methenyltetrahydrofolate and then the hydrolysis of 5,10-methenyltetrahydrofolate to 10-formyltetrahydrofolate. The chain is Bifunctional protein FolD from Streptococcus pyogenes serotype M2 (strain MGAS10270).